A 76-amino-acid polypeptide reads, in one-letter code: MKLTCVVIVAVLFLTAWTFVTAVPHSSNALENLYLKAHHEMNNPEASELNKRCYDGGTSCDSGIQCCSGWCIFVCF.

The first 22 residues, 1–22 (MKLTCVVIVAVLFLTAWTFVTA), serve as a signal peptide directing secretion. Residues 23-52 (VPHSSNALENLYLKAHHEMNNPEASELNKR) constitute a propeptide that is removed on maturation. Intrachain disulfides connect Cys-53/Cys-67, Cys-60/Cys-71, and Cys-66/Cys-75.

This sequence belongs to the conotoxin O1 superfamily. Expressed by the venom duct.

The protein resides in the secreted. Functionally, omega-conotoxins act at presynaptic membranes, they bind and block voltage-gated calcium channels (Cav). The sequence is that of Omega-conotoxin-like TxO3 (TXO3) from Conus textile (Cloth-of-gold cone).